The chain runs to 25 residues: Pregnancy-associated glycoprotein 74 (25 aa).

N-linked (GlcNAc...) asparagine glycans are attached at residues N4 and N21.

Belongs to the peptidase A1 family. Post-translationally, N-glycosylated. As to expression, placental cotyledons.

The protein resides in the secreted. It localises to the extracellular space. The polypeptide is Pregnancy-associated glycoprotein 74 (Bison bison (American bison)).